The primary structure comprises 162 residues: Peptide deformylase-like (162 aa).

Belongs to the polypeptide deformylase family.

The chain is Peptide deformylase-like from Staphylococcus aureus (strain COL).